Reading from the N-terminus, the 76-residue chain is Serine proteinase inhibitor IA-1 (76 aa).

S1 is subject to N-acetylserine.

Belongs to the protease inhibitor I9 family.

Specifically inhibits an endogenous intracellular serine proteinase (proteinase A). This is Serine proteinase inhibitor IA-1 from Pleurotus ostreatus (Oyster mushroom).